The following is a 508-amino-acid chain: DASH complex subunit ASK1 (508 aa).

Disordered stretches follow at residues 86 to 138 (LVDG…TLSS) and 150 to 355 (SRAA…QLRS). Over residues 116 to 138 (EPSQYTPRPQTSAGGHDTTTLSS) the composition is skewed to polar residues. Basic and acidic residues predominate over residues 161 to 175 (QHHDDSSVLTDRDGD). The segment covering 201–213 (DEMDIDMDEEDSE) has biased composition (acidic residues). Over residues 229 to 238 (RYYDDDHGFE) the composition is skewed to basic and acidic residues. Positions 239–258 (QGEEEEDEEEEEEEEEEEEG) are enriched in acidic residues. Positions 326–338 (IKQEDTEKKRPLW) are enriched in basic and acidic residues.

This sequence belongs to the DASH complex ASK1 family. In terms of assembly, component of the DASH complex consisting of ASK1, DAD1, DAD2, DAD3, DAD4, DAM1, DUO1, HSK3, SPC19 and SPC34, with a stoichiometry of one copy of each subunit per complex. Multiple DASH complexes oligomerize to form a ring that encircles spindle microtubules and organizes the rod-like NDC80 complexes of the outer kinetochore. On cytoplasmic microtubules, DASH complexes appear to form patches instead of rings.

The protein localises to the chromosome. It localises to the centromere. It is found in the kinetochore. The protein resides in the cytoplasm. Its subcellular location is the cytoskeleton. The protein localises to the spindle. It localises to the nucleus. Its function is as follows. Component of the DASH complex that connects microtubules with kinetochores and couples microtubule depolymerisation to chromosome movement; it is involved in retrieving kinetochores to the spindle poles before their re-orientation on the spindle in early mitosis and allows microtubule depolymerization to pull chromosomes apart and resist detachment during anaphase. Kinetochores, consisting of a centromere-associated inner segment and a microtubule-contacting outer segment, play a crucial role in chromosome segregation by mediating the physical connection between centromeric DNA and microtubules. Kinetochores also serve as an input point for the spindle assembly checkpoint, which delays anaphase until all chromosomes have bioriented on the mitotic spindle. This chain is DASH complex subunit ASK1, found in Chaetomium thermophilum (strain DSM 1495 / CBS 144.50 / IMI 039719) (Thermochaetoides thermophila).